The primary structure comprises 140 residues: Methylglyoxal synthase (140 aa).

One can recognise an MGS-like domain in the interval 1–140; sequence MKIALIAHDK…RGRKGEINGL (140 aa). Residues His-8, Lys-12, 34–37, and 54–55 contribute to the substrate site; these read TGTT and SG. The active-site Proton donor/acceptor is Asp-60. Residue His-87 participates in substrate binding.

This sequence belongs to the methylglyoxal synthase family.

The enzyme catalyses dihydroxyacetone phosphate = methylglyoxal + phosphate. Catalyzes the formation of methylglyoxal from dihydroxyacetone phosphate. The protein is Methylglyoxal synthase of Geobacillus sp. (strain WCH70).